The chain runs to 468 residues: Effector protein hopD2 (468 aa).

Positions 1–20 are enriched in polar residues; sequence MNPLQPIQHSITNSQMSGGQ. Positions 1 to 35 are disordered; the sequence is MNPLQPIQHSITNSQMSGGQQLEAEGSQAHNSYSH. The 326-residue stretch at 143–468 folds into the Tyrosine-protein phosphatase domain; sequence DASSPPSAND…TQWRAKIALE (326 aa). Cysteine 378 serves as the catalytic Phosphocysteine intermediate.

Interacts with EFR and FLS2 (via the kinase and cytoplasmic domains).

It localises to the secreted. The enzyme catalyses O-phospho-L-tyrosyl-[protein] + H2O = L-tyrosyl-[protein] + phosphate. Inhibited by sodium orthovanadate. Functionally, effector showing tyrosine-phosphatase activity required for host defense suppression. Functions inside plant cells causing suppression of HR (hypersensitive response), PR1 gene expression and oxidative burst probably by interfering with a MAPK (mitogen-activated protein kinase) pathway. MAPK cascades are known to activate defense-related transcription factors. Inhibits plant pattern-recognition receptors (PRRs) activation. In Pseudomonas syringae pv. tomato (strain ATCC BAA-871 / DC3000), this protein is Effector protein hopD2 (hopD2).